The chain runs to 1203 residues: Protein patched homolog 2 (1203 aa).

Residues 1–57 are Cytoplasmic-facing; it reads MTRSPPLRELPPSYTPPARTAAPQILAGSLKAPLWLRAYFQGLLFSLGCGIQRHCGK. A helical membrane pass occupies residues 58–78; sequence VLFLGLLAFGALALGLRMAII. Topologically, residues 79 to 392 are extracellular; that stretch reads ETNLEQLWVE…LDDILHAFSE (314 aa). N370 is a glycosylation site (N-linked (GlcNAc...) asparagine). A helical transmembrane segment spans residues 393–413; that stretch reads VSAARVVGGYLLMLAYACVTM. Positions 394–552 constitute an SSD domain; it reads SAARVVGGYL…MLVFPAILSL (159 aa). The Cytoplasmic portion of the chain corresponds to 414–428; that stretch reads LRWDCAQSQGSVGLA. Residues 429-449 traverse the membrane as a helical segment; that stretch reads GVLLVALAVASGLGLCALLGI. The Extracellular portion of the chain corresponds to 450–457; that stretch reads TFNAATTQ. Residues 458–478 traverse the membrane as a helical segment; it reads VLPFLALGIGVDDVFLLAHAF. The Cytoplasmic portion of the chain corresponds to 479-501; the sequence is TEALPGTPLQERMGECLQRTGTS. A helical membrane pass occupies residues 502-522; the sequence is VVLTSINNMAAFLMAALVPIP. Topologically, residues 523–531 are extracellular; it reads ALRAFSLQA. Residues 532 to 552 form a helical membrane-spanning segment; it reads AIVVGCTFVAVMLVFPAILSL. Residues 553 to 686 are Cytoplasmic-facing; the sequence is DLRRRHCQRL…APLLLQSHAK (134 aa). A helical membrane pass occupies residues 687–707; that stretch reads AIVLVLFGALLGLSLYGATLV. At 708-963 the chain is on the extracellular side; it reads QDGLALTDVV…WEQYLGLRRC (256 aa). An N-linked (GlcNAc...) asparagine glycan is attached at N812. The chain crosses the membrane as a helical span at residues 964-984; that stretch reads FLLAVCILLVCTFLVCALLLL. The Cytoplasmic portion of the chain corresponds to 985-991; that stretch reads NPWTAGL. Residues 992 to 1012 form a helical membrane-spanning segment; sequence IVLVLAMMTVELFGIMGFLGI. Position 1013 (K1013) is a topological domain, extracellular. The helical transmembrane segment at 1014–1034 threads the bilayer; it reads LSAIPVVILVASVGIGVEFTV. At 1035–1064 the chain is on the cytoplasmic side; the sequence is HVALGFLTTQGSRNLRAAHALEHTFAPVTD. The helical transmembrane segment at 1065 to 1085 threads the bilayer; it reads GAISTLLGLLMLAGSHFDFIV. Residues 1086–1093 are Extracellular-facing; that stretch reads RYFFAALT. A helical membrane pass occupies residues 1094–1114; the sequence is VLTLLGLLHGLVLLPVLLSIL. At 1115–1203 the chain is on the cytoplasmic side; sequence GPPPEVIQMY…SSRGPGPATG (89 aa). Residues 1171–1203 form a disordered region; sequence GAYIHPAPDEPPWSPAATSSGNLSSRGPGPATG. The segment covering 1186–1195 has biased composition (polar residues); sequence AATSSGNLSS.

It belongs to the patched family.

It localises to the membrane. Its function is as follows. Plays a role in the control of cellular growth. May have a role in epidermal development. May act as a receptor for Sonic hedgehog (SHH). The chain is Protein patched homolog 2 (PTCH2) from Homo sapiens (Human).